Here is a 213-residue protein sequence, read N- to C-terminus: Probable anti-sigma-F factor NrsF (213 aa).

The next 6 helical transmembrane spans lie at 27–47 (ALAI…LLQV), 51–71 (LGLA…TCLA), 91–111 (VPAA…FTLI), 126–146 (TWKS…AAVL), 159–179 (LAGF…YCLH), and 187–207 (FIGF…VLLG).

Belongs to the NrsF anti-sigma-F factor family.

The protein localises to the cell inner membrane. Its function is as follows. Probably an anti-sigma factor for extracytoplasmic function (ECF) sigma factor sigma-F (SigF), which responds to (hypo)chlorite. ECF sigma factors are held in an inactive form by a cognate anti-sigma factor. This Azospira oryzae (strain ATCC BAA-33 / DSM 13638 / PS) (Dechlorosoma suillum) protein is Probable anti-sigma-F factor NrsF.